A 346-amino-acid polypeptide reads, in one-letter code: N-acetyl-gamma-glutamyl-phosphate reductase (346 aa).

The active site involves C151.

Belongs to the NAGSA dehydrogenase family. Type 1 subfamily.

The protein localises to the cytoplasm. It catalyses the reaction N-acetyl-L-glutamate 5-semialdehyde + phosphate + NADP(+) = N-acetyl-L-glutamyl 5-phosphate + NADPH + H(+). Its pathway is amino-acid biosynthesis; L-arginine biosynthesis; N(2)-acetyl-L-ornithine from L-glutamate: step 3/4. Its function is as follows. Catalyzes the NADPH-dependent reduction of N-acetyl-5-glutamyl phosphate to yield N-acetyl-L-glutamate 5-semialdehyde. The sequence is that of N-acetyl-gamma-glutamyl-phosphate reductase from Ehrlichia canis (strain Jake).